We begin with the raw amino-acid sequence, 170 residues long: uncharacterized protein (170 aa).

The next 3 helical transmembrane spans lie at 31–51, 58–78, and 133–153; these read ILAV…FYIF, LFLI…LLLF, and IDFI…MLLF.

The protein to M.jannaschii MJ0554 and MJ0587.

The protein localises to the cell membrane. This is an uncharacterized protein from Methanocaldococcus jannaschii (strain ATCC 43067 / DSM 2661 / JAL-1 / JCM 10045 / NBRC 100440) (Methanococcus jannaschii).